The primary structure comprises 225 residues: N-(5'-phosphoribosyl)anthranilate isomerase (225 aa).

It belongs to the TrpF family.

It carries out the reaction N-(5-phospho-beta-D-ribosyl)anthranilate = 1-(2-carboxyphenylamino)-1-deoxy-D-ribulose 5-phosphate. It participates in amino-acid biosynthesis; L-tryptophan biosynthesis; L-tryptophan from chorismate: step 3/5. The sequence is that of N-(5'-phosphoribosyl)anthranilate isomerase from Nitrobacter hamburgensis (strain DSM 10229 / NCIMB 13809 / X14).